Reading from the N-terminus, the 128-residue chain is Cytochrome c-type biogenesis protein CcmE (128 aa).

Topologically, residues 1-8 are cytoplasmic; it reads MQKRVRNR. The helical; Signal-anchor for type II membrane protein transmembrane segment at 9-29 threads the bilayer; that stretch reads LITIIICFCSAALGISIVLYN. Topologically, residues 30–128 are periplasmic; sequence LEKNIVFFLP…KHDENYRPPS (99 aa). Heme contacts are provided by His120 and Tyr124.

Belongs to the CcmE/CycJ family.

It localises to the cell inner membrane. Its function is as follows. Heme chaperone required for the biogenesis of c-type cytochromes. Transiently binds heme delivered by CcmC and transfers the heme to apo-cytochromes in a process facilitated by CcmF and CcmH. This Rickettsia felis (strain ATCC VR-1525 / URRWXCal2) (Rickettsia azadi) protein is Cytochrome c-type biogenesis protein CcmE.